The chain runs to 293 residues: Bifunctional protein FolD (293 aa).

NADP(+) is bound by residues 165–167 (GRS), Ser190, and Ile231.

The protein belongs to the tetrahydrofolate dehydrogenase/cyclohydrolase family. In terms of assembly, homodimer.

The enzyme catalyses (6R)-5,10-methylene-5,6,7,8-tetrahydrofolate + NADP(+) = (6R)-5,10-methenyltetrahydrofolate + NADPH. The catalysed reaction is (6R)-5,10-methenyltetrahydrofolate + H2O = (6R)-10-formyltetrahydrofolate + H(+). It functions in the pathway one-carbon metabolism; tetrahydrofolate interconversion. In terms of biological role, catalyzes the oxidation of 5,10-methylenetetrahydrofolate to 5,10-methenyltetrahydrofolate and then the hydrolysis of 5,10-methenyltetrahydrofolate to 10-formyltetrahydrofolate. The chain is Bifunctional protein FolD from Synechococcus sp. (strain CC9311).